The chain runs to 959 residues: MERLKAVEEKWQERWREARLFEADPQPGRRKFFITFPYPYVNAYPHLGSAFTILRVDIMARYKRMRGYNVLFPQGWHATGGPIVSSALRVREGDPRIIKTLRDMGIPEEDIPRFRDPRYWVEFFTKAWRRDLERYGMSIDWRREFYTTSLNPAYSRFIEWQYLKLREKGFVGKGRHPVVWCPKEQKVVGDHDRPDEYAGISPQEAVIIKFRGRDGLVYPALTYRPETVFGVTNLWVHPDATYLVAEVDGEERWIIGEQAARELADQGHRVVILERIEGRRLLGRIVVNPADGREVPVLPASFVRPDLGTGVVMSVPAHAPYDYVALMELKRRPETLREYGLEPGVVESLEPIQLIAVPRAEGLLVVEEVRRRGVESQMDREKLDEATREVYAREFYEGIMLETTGRFSGLKVAEAKEKVVEWLEERGAALRIYTLPQEVYCRCGARTHVKIVEDQWFLLYSKPEWKALAREAVARMEFLPGHVRRDFEAIIEALRDWAFTHKGELGTPLPWDREWVIESLSDSTIYMAYYTIAKYTQHPEKYGVEPEMLTPEVFDYVFLGAGDPGEVSRRSGIPQGLLEEMRREFLYWYPLDMRISGKDLIPNHLVFFIFHHTAIFPRELWPRAIGVNGWVLVAGEKMSKSKGNFILLRQALDWWGADATRWAEVLAGADSGLDDANFEPSVADSAVSLLSQWLDFVRENYGRPARREERWVDRWFESRLNSTIARVTRLMEEANFKTALVEAWYKLQESYRWYLRRSGGEPREDLLRRFIEVQTLLIAPFAPHTAEEAWEAMGREGFASTASWPEPDESKISPEVEAAEETVQAVLEDAREVLSLIGGADTLVVTVAAEWKYRAVEAVRRARERGASMKEALREAFKVEGVDKREAARLVQQLSRAPEVLRRAAPRSVELEALRDAAQLLQEELGVKVVVETEEDGGSPRRANALPGRPALYAEKRGG.

A 'HIGH' region motif is present at residues 39 to 49; that stretch reads PYVNAYPHLGS. The 'KMSKS' region signature appears at 637 to 641; the sequence is KMSKS. Lysine 640 lines the ATP pocket. The segment at 933–959 is disordered; sequence TEEDGGSPRRANALPGRPALYAEKRGG.

It belongs to the class-I aminoacyl-tRNA synthetase family.

It is found in the cytoplasm. It catalyses the reaction tRNA(Leu) + L-leucine + ATP = L-leucyl-tRNA(Leu) + AMP + diphosphate. In Aeropyrum pernix (strain ATCC 700893 / DSM 11879 / JCM 9820 / NBRC 100138 / K1), this protein is Leucine--tRNA ligase.